A 285-amino-acid polypeptide reads, in one-letter code: Bifunctional protein FolD (285 aa).

NADP(+) is bound by residues 166–168 (GAS), S191, and I232.

It belongs to the tetrahydrofolate dehydrogenase/cyclohydrolase family. Homodimer.

The catalysed reaction is (6R)-5,10-methylene-5,6,7,8-tetrahydrofolate + NADP(+) = (6R)-5,10-methenyltetrahydrofolate + NADPH. It catalyses the reaction (6R)-5,10-methenyltetrahydrofolate + H2O = (6R)-10-formyltetrahydrofolate + H(+). It participates in one-carbon metabolism; tetrahydrofolate interconversion. Catalyzes the oxidation of 5,10-methylenetetrahydrofolate to 5,10-methenyltetrahydrofolate and then the hydrolysis of 5,10-methenyltetrahydrofolate to 10-formyltetrahydrofolate. The sequence is that of Bifunctional protein FolD from Actinobacillus pleuropneumoniae serotype 7 (strain AP76).